A 143-amino-acid polypeptide reads, in one-letter code: Heat shock protein Hsp-16.48/Hsp-16.49 (143 aa).

The sHSP domain maps to 35-140 (HNSFNFSDNI…SSRSIPINFV (106 aa)).

The protein belongs to the small heat shock protein (HSP20) family.

This Caenorhabditis elegans protein is Heat shock protein Hsp-16.48/Hsp-16.49 (hsp-16.48).